We begin with the raw amino-acid sequence, 83 residues long: Gas vesicle protein G (83 aa).

It belongs to the gas vesicle GvpG family. In terms of assembly, gvpF to GvpM interact with each other in vitro, and may form multi-subunit complex(es).

It localises to the gas vesicle. Its function is as follows. Proteins GvpF to GvpM might be involved in nucleating gas vesicle formation. A minor component of the gas vesicle. Gas vesicles are hollow, gas filled proteinaceous nanostructures found in some microorganisms. They allow positioning of halobacteria at the optimal depth for growth in the poorly aerated, shallow brine pools of their habitat. In terms of biological role, expression of a 9.5 kb mc-vac DNA fragment containing 2 divergently transcribed regions (gvpD-gvpE-gvpF-gvpG-gvpH-gvpI-gvpJ-gvpK-gvpL-gvpM and gvpA-gvpC-gvpN-gvpO) allows H.volcanii to produce gas vesicles. In Haloferax mediterranei (strain ATCC 33500 / DSM 1411 / JCM 8866 / NBRC 14739 / NCIMB 2177 / R-4) (Halobacterium mediterranei), this protein is Gas vesicle protein G.